We begin with the raw amino-acid sequence, 290 residues long: UPF0761 membrane protein YihY (290 aa).

6 consecutive transmembrane segments (helical) span residues 44–64 (LLSL…FPMF), 104–124 (VGAC…DSAL), 140–160 (FAVY…SLAI), 183–203 (ILPL…VPTT), 210–230 (ALVG…GFAL), and 244–264 (VLAV…IVLL).

The protein belongs to the UPF0761 family.

It is found in the cell inner membrane. This is UPF0761 membrane protein YihY from Salmonella paratyphi B (strain ATCC BAA-1250 / SPB7).